The sequence spans 244 residues: 1-(5-phosphoribosyl)-5-[(5-phosphoribosylamino)methylideneamino] imidazole-4-carboxamide isomerase (244 aa).

Asp-15 serves as the catalytic Proton acceptor. Asp-136 serves as the catalytic Proton donor.

This sequence belongs to the HisA/HisF family.

It is found in the cytoplasm. It carries out the reaction 1-(5-phospho-beta-D-ribosyl)-5-[(5-phospho-beta-D-ribosylamino)methylideneamino]imidazole-4-carboxamide = 5-[(5-phospho-1-deoxy-D-ribulos-1-ylimino)methylamino]-1-(5-phospho-beta-D-ribosyl)imidazole-4-carboxamide. It functions in the pathway amino-acid biosynthesis; L-histidine biosynthesis; L-histidine from 5-phospho-alpha-D-ribose 1-diphosphate: step 4/9. The sequence is that of 1-(5-phosphoribosyl)-5-[(5-phosphoribosylamino)methylideneamino] imidazole-4-carboxamide isomerase from Dehalococcoides mccartyi (strain CBDB1).